We begin with the raw amino-acid sequence, 143 residues long: Large ribosomal subunit protein uL11 (143 aa).

The protein belongs to the universal ribosomal protein uL11 family. Part of the ribosomal stalk of the 50S ribosomal subunit. Interacts with L10 and the large rRNA to form the base of the stalk. L10 forms an elongated spine to which L12 dimers bind in a sequential fashion forming a multimeric L10(L12)X complex. Post-translationally, one or more lysine residues are methylated.

Functionally, forms part of the ribosomal stalk which helps the ribosome interact with GTP-bound translation factors. The protein is Large ribosomal subunit protein uL11 of Laribacter hongkongensis (strain HLHK9).